We begin with the raw amino-acid sequence, 191 residues long: Small ribosomal subunit protein uS5 (191 aa).

One can recognise an S5 DRBM domain in the interval 21–84; that stretch reads FADRLVAINR…EQAKRQMIRV (64 aa). The segment at 155–191 is disordered; it reads LRKESSPRSVAQRRGKKVADILPKVDAAPAPAETAEA. Over residues 181-191 the composition is skewed to low complexity; the sequence is AAPAPAETAEA.

This sequence belongs to the universal ribosomal protein uS5 family. As to quaternary structure, part of the 30S ribosomal subunit. Contacts proteins S4 and S8.

In terms of biological role, with S4 and S12 plays an important role in translational accuracy. Its function is as follows. Located at the back of the 30S subunit body where it stabilizes the conformation of the head with respect to the body. This Roseobacter denitrificans (strain ATCC 33942 / OCh 114) (Erythrobacter sp. (strain OCh 114)) protein is Small ribosomal subunit protein uS5.